The sequence spans 155 residues: Regulatory protein RecX (155 aa).

The protein belongs to the RecX family.

The protein resides in the cytoplasm. In terms of biological role, modulates RecA activity. The sequence is that of Regulatory protein RecX from Pseudomonas savastanoi pv. phaseolicola (strain 1448A / Race 6) (Pseudomonas syringae pv. phaseolicola (strain 1448A / Race 6)).